A 188-amino-acid chain; its full sequence is dITP/XTP pyrophosphatase (188 aa).

10–15 serves as a coordination point for substrate; the sequence is TSNPHK. The Mg(2+) site is built by Glu39 and Asp69. Asp69 acts as the Proton acceptor in catalysis. Residues Ser70, 145 to 148, Lys168, and 173 to 174 contribute to the substrate site; these read FGFD and HR.

Belongs to the HAM1 NTPase family. In terms of assembly, homodimer. Requires Mg(2+) as cofactor.

The enzyme catalyses XTP + H2O = XMP + diphosphate + H(+). It catalyses the reaction dITP + H2O = dIMP + diphosphate + H(+). It carries out the reaction ITP + H2O = IMP + diphosphate + H(+). Pyrophosphatase that catalyzes the hydrolysis of nucleoside triphosphates to their monophosphate derivatives, with a high preference for the non-canonical purine nucleotides XTP (xanthosine triphosphate), dITP (deoxyinosine triphosphate) and ITP. Seems to function as a house-cleaning enzyme that removes non-canonical purine nucleotides from the nucleotide pool, thus preventing their incorporation into DNA/RNA and avoiding chromosomal lesions. The chain is dITP/XTP pyrophosphatase from Ignicoccus hospitalis (strain KIN4/I / DSM 18386 / JCM 14125).